Consider the following 161-residue polypeptide: MLRVTSYHPAGTPGDEPSGYVTLAHDQRHLRRKLLHLQNDEMVMLDLKEAVLFAHGDLLVVENGDLIEVRAADEKLFEIKAKDRLHLIELAWHLGNRHLAAQIEEERILILRDHVIRAMLEGLGATVRDVEEPFQPARGAYHAHGGHSHDHGQGHHHHDHG.

The tract at residues 138–161 (RGAYHAHGGHSHDHGQGHHHHDHG) is disordered.

This sequence belongs to the UreE family.

It is found in the cytoplasm. Its function is as follows. Involved in urease metallocenter assembly. Binds nickel. Probably functions as a nickel donor during metallocenter assembly. The protein is Urease accessory protein UreE of Agrobacterium fabrum (strain C58 / ATCC 33970) (Agrobacterium tumefaciens (strain C58)).